Consider the following 689-residue polypeptide: Elongation factor G (689 aa).

The 275-residue stretch at 8–282 (ERTRNIGIMA…GVVAYMPSPL (275 aa)) folds into the tr-type G domain. GTP-binding positions include 17-24 (AHIDAGKT), 81-85 (DTPGH), and 135-138 (NKMD).

This sequence belongs to the TRAFAC class translation factor GTPase superfamily. Classic translation factor GTPase family. EF-G/EF-2 subfamily.

The protein localises to the cytoplasm. Functionally, catalyzes the GTP-dependent ribosomal translocation step during translation elongation. During this step, the ribosome changes from the pre-translocational (PRE) to the post-translocational (POST) state as the newly formed A-site-bound peptidyl-tRNA and P-site-bound deacylated tRNA move to the P and E sites, respectively. Catalyzes the coordinated movement of the two tRNA molecules, the mRNA and conformational changes in the ribosome. This is Elongation factor G from Alkaliphilus metalliredigens (strain QYMF).